The following is a 218-amino-acid chain: Octanoyltransferase (218 aa).

A BPL/LPL catalytic domain is found at Gly-32–Asp-218. Substrate-binding positions include Arg-71–His-78, Ala-151–Gly-153, and Gly-164–Ser-166. The active-site Acyl-thioester intermediate is Cys-182.

It belongs to the LipB family.

The protein resides in the cytoplasm. The catalysed reaction is octanoyl-[ACP] + L-lysyl-[protein] = N(6)-octanoyl-L-lysyl-[protein] + holo-[ACP] + H(+). It participates in protein modification; protein lipoylation via endogenous pathway; protein N(6)-(lipoyl)lysine from octanoyl-[acyl-carrier-protein]: step 1/2. In terms of biological role, catalyzes the transfer of endogenously produced octanoic acid from octanoyl-acyl-carrier-protein onto the lipoyl domains of lipoate-dependent enzymes. Lipoyl-ACP can also act as a substrate although octanoyl-ACP is likely to be the physiological substrate. This Cereibacter sphaeroides (strain ATCC 17023 / DSM 158 / JCM 6121 / CCUG 31486 / LMG 2827 / NBRC 12203 / NCIMB 8253 / ATH 2.4.1.) (Rhodobacter sphaeroides) protein is Octanoyltransferase.